A 55-amino-acid polypeptide reads, in one-letter code: Accessory gland-specific peptide 70A (55 aa).

A signal peptide spans 1–19 (MKTLSLFLVLVCLLGLVQS). Hydroxyproline is present on residues Pro28, Pro32, Pro34, and Pro38. Cys43 and Cys55 are joined by a disulfide.

As to expression, main cells of the accessory glands of males (paragonial gland).

It localises to the secreted. Its function is as follows. Represses female sexual receptivity and stimulates oviposition. This is Accessory gland-specific peptide 70A (Acp70A) from Drosophila mauritiana (Fruit fly).